The primary structure comprises 279 residues: NH(3)-dependent NAD(+) synthetase (279 aa).

46 to 53 contributes to the ATP binding site; the sequence is GVSGGQDS. Aspartate 52 provides a ligand contact to Mg(2+). Position 139 (arginine 139) interacts with deamido-NAD(+). Threonine 159 is an ATP binding site. Mg(2+) is bound at residue glutamate 164. Residues lysine 172 and aspartate 179 each contribute to the deamido-NAD(+) site. Residues lysine 188 and threonine 210 each coordinate ATP. Deamido-NAD(+) is bound at residue 259-260; that stretch reads HK.

The protein belongs to the NAD synthetase family. Homodimer.

It carries out the reaction deamido-NAD(+) + NH4(+) + ATP = AMP + diphosphate + NAD(+) + H(+). The protein operates within cofactor biosynthesis; NAD(+) biosynthesis; NAD(+) from deamido-NAD(+) (ammonia route): step 1/1. Catalyzes the ATP-dependent amidation of deamido-NAD to form NAD. Uses ammonia as a nitrogen source. This is NH(3)-dependent NAD(+) synthetase from Leifsonia xyli subsp. xyli (strain CTCB07).